A 102-amino-acid polypeptide reads, in one-letter code: ATP-dependent Clp protease adapter protein ClpS (102 aa).

This sequence belongs to the ClpS family. In terms of assembly, binds to the N-terminal domain of the chaperone ClpA.

Involved in the modulation of the specificity of the ClpAP-mediated ATP-dependent protein degradation. This Shewanella sediminis (strain HAW-EB3) protein is ATP-dependent Clp protease adapter protein ClpS.